A 513-amino-acid chain; its full sequence is ATP synthase subunit alpha (513 aa).

169 to 176 (GDRQIGKT) provides a ligand contact to ATP.

Belongs to the ATPase alpha/beta chains family. F-type ATPases have 2 components, CF(1) - the catalytic core - and CF(0) - the membrane proton channel. CF(1) has five subunits: alpha(3), beta(3), gamma(1), delta(1), epsilon(1). CF(0) has three main subunits: a(1), b(2) and c(9-12). The alpha and beta chains form an alternating ring which encloses part of the gamma chain. CF(1) is attached to CF(0) by a central stalk formed by the gamma and epsilon chains, while a peripheral stalk is formed by the delta and b chains.

The protein resides in the cell inner membrane. The catalysed reaction is ATP + H2O + 4 H(+)(in) = ADP + phosphate + 5 H(+)(out). Its function is as follows. Produces ATP from ADP in the presence of a proton gradient across the membrane. The alpha chain is a regulatory subunit. The sequence is that of ATP synthase subunit alpha from Francisella tularensis subsp. tularensis (strain SCHU S4 / Schu 4).